The following is a 478-amino-acid chain: Sulfate adenylyltransferase subunit 1 (478 aa).

One can recognise a tr-type G domain in the interval 24–240 (KSLLRFLTCG…VLENVDIDAD (217 aa)). The tract at residues 33–40 (GSVDDGKS) is G1. 33–40 (GSVDDGKS) contributes to the GTP binding site. A G2 region spans residues 91–95 (GITID). The interval 112–115 (DTPG) is G3. GTP is bound by residues 112 to 116 (DTPGH) and 167 to 170 (NKMD). The G4 stretch occupies residues 167-170 (NKMD). The G5 stretch occupies residues 206–208 (SAL).

The protein belongs to the TRAFAC class translation factor GTPase superfamily. Classic translation factor GTPase family. CysN/NodQ subfamily. As to quaternary structure, heterodimer composed of CysD, the smaller subunit, and CysN.

The catalysed reaction is sulfate + ATP + H(+) = adenosine 5'-phosphosulfate + diphosphate. It functions in the pathway sulfur metabolism; hydrogen sulfide biosynthesis; sulfite from sulfate: step 1/3. With CysD forms the ATP sulfurylase (ATPS) that catalyzes the adenylation of sulfate producing adenosine 5'-phosphosulfate (APS) and diphosphate, the first enzymatic step in sulfur assimilation pathway. APS synthesis involves the formation of a high-energy phosphoric-sulfuric acid anhydride bond driven by GTP hydrolysis by CysN coupled to ATP hydrolysis by CysD. In Aliivibrio fischeri (strain ATCC 700601 / ES114) (Vibrio fischeri), this protein is Sulfate adenylyltransferase subunit 1.